We begin with the raw amino-acid sequence, 266 residues long: Imidazole glycerol phosphate synthase subunit HisF (266 aa).

Active-site residues include aspartate 11 and aspartate 130.

It belongs to the HisA/HisF family. In terms of assembly, heterodimer of HisH and HisF.

It is found in the cytoplasm. It carries out the reaction 5-[(5-phospho-1-deoxy-D-ribulos-1-ylimino)methylamino]-1-(5-phospho-beta-D-ribosyl)imidazole-4-carboxamide + L-glutamine = D-erythro-1-(imidazol-4-yl)glycerol 3-phosphate + 5-amino-1-(5-phospho-beta-D-ribosyl)imidazole-4-carboxamide + L-glutamate + H(+). Its pathway is amino-acid biosynthesis; L-histidine biosynthesis; L-histidine from 5-phospho-alpha-D-ribose 1-diphosphate: step 5/9. IGPS catalyzes the conversion of PRFAR and glutamine to IGP, AICAR and glutamate. The HisF subunit catalyzes the cyclization activity that produces IGP and AICAR from PRFAR using the ammonia provided by the HisH subunit. The polypeptide is Imidazole glycerol phosphate synthase subunit HisF (Delftia acidovorans (strain DSM 14801 / SPH-1)).